The chain runs to 212 residues: uncharacterized protein (212 aa).

The protein belongs to the flavoredoxin family. FMN is required as a cofactor.

This is an uncharacterized protein from Methanothermobacter thermautotrophicus (strain ATCC 29096 / DSM 1053 / JCM 10044 / NBRC 100330 / Delta H) (Methanobacterium thermoautotrophicum).